The primary structure comprises 227 residues: Ion-translocating oxidoreductase complex subunit E (227 aa).

A run of 6 helical transmembrane segments spans residues 18 to 38, 39 to 59, 69 to 89, 93 to 113, 125 to 145, and 182 to 202; these read ALVQ…VTNA, LGLG…VSLV, IPVF…LMNA, GLYL…IIIG, LPAV…LVLL, and HFLL…LIAL.

It belongs to the NqrDE/RnfAE family. As to quaternary structure, the complex is composed of six subunits: RnfA, RnfB, RnfC, RnfD, RnfE and RnfG.

The protein resides in the cell inner membrane. Functionally, part of a membrane-bound complex that couples electron transfer with translocation of ions across the membrane. The polypeptide is Ion-translocating oxidoreductase complex subunit E (Aliivibrio fischeri (strain ATCC 700601 / ES114) (Vibrio fischeri)).